The chain runs to 341 residues: Trimethylamine N-oxide transport system ATP-binding protein TmoW (341 aa).

In terms of domain architecture, ABC transporter spans 6–265 (IKCESVYKIF…PATEYVRKFT (260 aa)). 61-68 (GLSGSGKS) serves as a coordination point for ATP.

Belongs to the ABC transporter superfamily. In terms of assembly, the complex is probably composed of two ATP-binding proteins (TmoW), two transmembrane proteins (TmoV) and a solute-binding protein (TmoX).

Its subcellular location is the cell inner membrane. It catalyses the reaction a quaternary ammonium(out) + ATP + H2O = a quaternary ammonium(in) + ADP + phosphate + H(+). In terms of biological role, part of the ABC transporter complex TmoXWV involved in trimethylamine N-oxide (TMAO) import. Responsible for energy coupling to the transport system. In Pelagibacter ubique (strain HTCC1062), this protein is Trimethylamine N-oxide transport system ATP-binding protein TmoW.